Consider the following 334-residue polypeptide: Methionine adenosyltransferase 2 subunit beta (334 aa).

Residues 37-40 (TGLL), 60-62 (FRR), 71-72 (NL), C93, R97, Y159, and L185 contribute to the NADP(+) site. A Phosphothreonine modification is found at T309. The tract at residues 319 to 334 (LWPFLIDKRWRQTVFH) is required for interaction with MAT2A.

It belongs to the dTDP-4-dehydrorhamnose reductase family. MAT2B subfamily. In terms of assembly, heterotrimer; composed of a catalytic MAT2A homodimer that binds one regulatory MAT2B chain. Heterohexamer; composed of a central, catalytic MAT2A homotetramer flanked on either side by a regulatory MAT2B chain. NADP binding increases the affinity for MAT2A.

The protein operates within amino-acid biosynthesis; S-adenosyl-L-methionine biosynthesis; S-adenosyl-L-methionine from L-methionine: step 1/1. Its function is as follows. Regulatory subunit of S-adenosylmethionine synthetase 2, an enzyme that catalyzes the formation of S-adenosylmethionine from methionine and ATP. Regulates MAT2A catalytic activity by changing its kinetic properties, increasing its affinity for L-methionine. Can bind NADP (in vitro). The protein is Methionine adenosyltransferase 2 subunit beta (MAT2B) of Bos taurus (Bovine).